A 498-amino-acid chain; its full sequence is Glycerol kinase (498 aa).

Residue threonine 14 participates in ADP binding. The ATP site is built by threonine 14 and threonine 15. Threonine 14 contributes to the sn-glycerol 3-phosphate binding site. Residue arginine 18 coordinates ADP. Residues arginine 84, glutamate 85, tyrosine 136, and aspartate 246 each coordinate sn-glycerol 3-phosphate. Glycerol contacts are provided by arginine 84, glutamate 85, tyrosine 136, aspartate 246, and glutamine 247. ADP is bound by residues threonine 268 and glycine 311. Positions 268, 311, 315, and 412 each coordinate ATP. ADP contacts are provided by glycine 412 and asparagine 416.

It belongs to the FGGY kinase family.

It catalyses the reaction glycerol + ATP = sn-glycerol 3-phosphate + ADP + H(+). It participates in polyol metabolism; glycerol degradation via glycerol kinase pathway; sn-glycerol 3-phosphate from glycerol: step 1/1. With respect to regulation, inhibited by fructose 1,6-bisphosphate (FBP). In terms of biological role, key enzyme in the regulation of glycerol uptake and metabolism. Catalyzes the phosphorylation of glycerol to yield sn-glycerol 3-phosphate. The chain is Glycerol kinase from Leptospira biflexa serovar Patoc (strain Patoc 1 / Ames).